A 464-amino-acid polypeptide reads, in one-letter code: tRNA(Ile)-lysidine synthase (464 aa).

30 to 35 (SGGVDS) serves as a coordination point for ATP.

Belongs to the tRNA(Ile)-lysidine synthase family.

It localises to the cytoplasm. The enzyme catalyses cytidine(34) in tRNA(Ile2) + L-lysine + ATP = lysidine(34) in tRNA(Ile2) + AMP + diphosphate + H(+). Ligates lysine onto the cytidine present at position 34 of the AUA codon-specific tRNA(Ile) that contains the anticodon CAU, in an ATP-dependent manner. Cytidine is converted to lysidine, thus changing the amino acid specificity of the tRNA from methionine to isoleucine. This Shewanella oneidensis (strain ATCC 700550 / JCM 31522 / CIP 106686 / LMG 19005 / NCIMB 14063 / MR-1) protein is tRNA(Ile)-lysidine synthase.